A 95-amino-acid polypeptide reads, in one-letter code: uncharacterized protein (95 aa).

The disordered stretch occupies residues 46 to 68; that stretch reads GDRGTNGRTEAEHDGIPHSRKKV.

This is an uncharacterized protein from Schizosaccharomyces pombe (strain 972 / ATCC 24843) (Fission yeast).